The following is a 526-amino-acid chain: 1,4-beta-D-glucan cellobiohydrolase B (526 aa).

The N-terminal stretch at 1-23 (MASSFQLYKALLFFSSLLSAVQA) is a signal peptide. The tract at residues 24-458 (QKVGTQQAEV…SNIKFGPIGS (435 aa)) is catalytic. Glu-235 functions as the Nucleophile in the catalytic mechanism. Glu-240 (proton donor) is an active-site residue. Residues Asn-293 and Asn-400 are each glycosylated (N-linked (GlcNAc...) asparagine). The interval 459 to 490 (TFGNGGGSGPTTTVTTSTATSTTSSATSTATG) is ser/Thr-rich linker. The tract at residues 464-488 (GGSGPTTTVTTSTATSTTSSATSTA) is disordered. Over residues 468–488 (PTTTVTTSTATSTTSSATSTA) the composition is skewed to low complexity. In terms of domain architecture, CBM1 spans 490-526 (GQAQHWEQCGGNGWTGPTVCASPWACTVVNSWYSQCL). Disulfide bonds link Cys-498-Cys-515 and Cys-509-Cys-525.

The protein belongs to the glycosyl hydrolase 7 (cellulase C) family.

It localises to the secreted. The enzyme catalyses Hydrolysis of (1-&gt;4)-beta-D-glucosidic linkages in cellulose and cellotetraose, releasing cellobiose from the non-reducing ends of the chains.. Functionally, the biological conversion of cellulose to glucose generally requires three types of hydrolytic enzymes: (1) Endoglucanases which cut internal beta-1,4-glucosidic bonds; (2) Exocellobiohydrolases that cut the disaccharide cellobiose from the non-reducing end of the cellulose polymer chain; (3) Beta-1,4-glucosidases which hydrolyze the cellobiose and other short cello-oligosaccharides to glucose. This Emericella nidulans (strain FGSC A4 / ATCC 38163 / CBS 112.46 / NRRL 194 / M139) (Aspergillus nidulans) protein is 1,4-beta-D-glucan cellobiohydrolase B (cbhB).